The primary structure comprises 140 residues: 3-hydroxyacyl-[acyl-carrier-protein] dehydratase FabZ (140 aa).

His-47 is an active-site residue.

The protein belongs to the thioester dehydratase family. FabZ subfamily.

It is found in the cytoplasm. The enzyme catalyses a (3R)-hydroxyacyl-[ACP] = a (2E)-enoyl-[ACP] + H2O. Involved in unsaturated fatty acids biosynthesis. Catalyzes the dehydration of short chain beta-hydroxyacyl-ACPs and long chain saturated and unsaturated beta-hydroxyacyl-ACPs. The polypeptide is 3-hydroxyacyl-[acyl-carrier-protein] dehydratase FabZ (Streptococcus gordonii (strain Challis / ATCC 35105 / BCRC 15272 / CH1 / DL1 / V288)).